Consider the following 335-residue polypeptide: Peroxidase 2 (335 aa).

Residues 1–29 form the signal peptide; it reads MAAATAPKTMPSSVFAAALLLLAAAACQA. Disulfide bonds link C44–C125, C77–C82, C131–C329, and C212–C238. The active-site Proton acceptor is H75. Ca(2+) is bound by residues D76, V79, G81, D83, and S85. N166 and N180 each carry an N-linked (GlcNAc...) asparagine glycan. H205 provides a ligand contact to heme b. T206 contributes to the Ca(2+) binding site. N-linked (GlcNAc...) asparagine glycosylation occurs at N241. Positions 253, 256, and 261 each coordinate Ca(2+).

This sequence belongs to the peroxidase family. Classical plant (class III) peroxidase subfamily. Requires heme b as cofactor. Ca(2+) serves as cofactor. As to expression, expressed in the elongating region of young roots, and in root vascular tissues and epidermis.

The protein localises to the secreted. It carries out the reaction 2 a phenolic donor + H2O2 = 2 a phenolic radical donor + 2 H2O. Its function is as follows. Removal of H(2)O(2), oxidation of toxic reductants, biosynthesis and degradation of lignin, suberization, auxin catabolism, response to environmental stresses such as wounding, pathogen attack and oxidative stress. These functions might be dependent on each isozyme/isoform in each plant tissue. This chain is Peroxidase 2 (PER2), found in Zea mays (Maize).